Reading from the N-terminus, the 1395-residue chain is DNA polymerase II large subunit (1395 aa).

Disordered stretches follow at residues Ile-279–Glu-320 and Gly-657–Thr-704. Residues Glu-283 to Glu-312 show a composition bias toward acidic residues. Composition is skewed to basic and acidic residues over residues Gly-661 to Leu-671 and Asp-690 to Asp-700.

Belongs to the archaeal DNA polymerase II family. As to quaternary structure, heterodimer of a large subunit and a small subunit. In terms of processing, this protein undergoes a protein self splicing that involves a post-translational excision of the intervening region (intein) followed by peptide ligation.

The enzyme catalyses DNA(n) + a 2'-deoxyribonucleoside 5'-triphosphate = DNA(n+1) + diphosphate. It carries out the reaction Exonucleolytic cleavage in the 3'- to 5'-direction to yield nucleoside 5'-phosphates.. Functionally, possesses two activities: a DNA synthesis (polymerase) and an exonucleolytic activity that degrades single-stranded DNA in the 3'- to 5'-direction. Has a template-primer preference which is characteristic of a replicative DNA polymerase. This is DNA polymerase II large subunit from Haloarcula marismortui (strain ATCC 43049 / DSM 3752 / JCM 8966 / VKM B-1809) (Halobacterium marismortui).